Consider the following 760-residue polypeptide: Catalase-peroxidase (760 aa).

Residues 1 to 57 (MTDSQDNRTPESPQGVDRKAEGGCPVLHDGVTAQGSESENPAIDSPTPRTGGRPNSL) form a disordered region. The tryptophyl-tyrosyl-methioninium (Trp-Tyr) (with M-277) cross-link spans 129–251 (WHAAGTYRIH…LGAVQMGLIY (123 aa)). The Proton acceptor role is filled by histidine 130. Residues 251-277 (YVNPEGPNGNPDPLASARDIRETFARM) constitute a cross-link (tryptophyl-tyrosyl-methioninium (Tyr-Met) (with W-129)). Histidine 292 is a heme b binding site.

Belongs to the peroxidase family. Peroxidase/catalase subfamily. Homodimer or homotetramer. The cofactor is heme b. In terms of processing, formation of the three residue Trp-Tyr-Met cross-link is important for the catalase, but not the peroxidase activity of the enzyme.

The catalysed reaction is H2O2 + AH2 = A + 2 H2O. The enzyme catalyses 2 H2O2 = O2 + 2 H2O. Functionally, bifunctional enzyme with both catalase and broad-spectrum peroxidase activity. In Nocardioides sp. (strain ATCC BAA-499 / JS614), this protein is Catalase-peroxidase.